The chain runs to 156 residues: Peptide deformylase (156 aa).

2 residues coordinate Fe cation: C90 and H132. E133 is a catalytic residue. H136 is a Fe cation binding site.

This sequence belongs to the polypeptide deformylase family. The cofactor is Fe(2+).

The enzyme catalyses N-terminal N-formyl-L-methionyl-[peptide] + H2O = N-terminal L-methionyl-[peptide] + formate. Removes the formyl group from the N-terminal Met of newly synthesized proteins. Requires at least a dipeptide for an efficient rate of reaction. N-terminal L-methionine is a prerequisite for activity but the enzyme has broad specificity at other positions. This is Peptide deformylase from Natranaerobius thermophilus (strain ATCC BAA-1301 / DSM 18059 / JW/NM-WN-LF).